Consider the following 312-residue polypeptide: Putative electron transfer flavoprotein subunit YdiR (312 aa).

254 to 282 (LYLTLGISGQIQHMVGGNGAKVIVAINKD) is a binding site for FAD.

This sequence belongs to the ETF alpha-subunit/FixB family. YdiR and YdiQ form a heterodimer.

May play a role in a redox process. This is Putative electron transfer flavoprotein subunit YdiR (ydiR) from Escherichia coli (strain K12).